The primary structure comprises 149 residues: Arginine repressor (149 aa).

Belongs to the ArgR family.

The protein localises to the cytoplasm. It functions in the pathway amino-acid biosynthesis; L-arginine biosynthesis [regulation]. Regulates arginine biosynthesis genes. This Bacillus velezensis (strain DSM 23117 / BGSC 10A6 / LMG 26770 / FZB42) (Bacillus amyloliquefaciens subsp. plantarum) protein is Arginine repressor.